The chain runs to 240 residues: DNA repair protein RecO (240 aa).

This sequence belongs to the RecO family.

In terms of biological role, involved in DNA repair and RecF pathway recombination. The protein is DNA repair protein RecO of Actinobacillus pleuropneumoniae serotype 7 (strain AP76).